The primary structure comprises 809 residues: Phenylalanine--tRNA ligase beta subunit (809 aa).

The region spanning 39–154 is the tRNA-binding domain; the sequence is APPTSKIVVG…EDTPVGQDIR (116 aa). The B5 domain maps to 405-480; sequence PQRAPVKMRV…RIYGFEKIPA (76 aa). Residues aspartate 458, aspartate 464, glutamate 467, and glutamate 468 each contribute to the Mg(2+) site. Residues 707-808 enclose the FDX-ACB domain; that stretch reads SKFPPVRRDI…RMARAGARLR (102 aa).

Belongs to the phenylalanyl-tRNA synthetase beta subunit family. Type 1 subfamily. In terms of assembly, tetramer of two alpha and two beta subunits. Mg(2+) serves as cofactor.

Its subcellular location is the cytoplasm. The catalysed reaction is tRNA(Phe) + L-phenylalanine + ATP = L-phenylalanyl-tRNA(Phe) + AMP + diphosphate + H(+). The sequence is that of Phenylalanine--tRNA ligase beta subunit from Burkholderia lata (strain ATCC 17760 / DSM 23089 / LMG 22485 / NCIMB 9086 / R18194 / 383).